The chain runs to 981 residues: Echinoderm microtubule-associated protein-like 4 (981 aa).

Position 1 is an N-acetylmethionine (M1). Disordered stretches follow at residues M1–V20 and D57–I205. The microtubule-binding stretch occupies residues M1 to D249. 4 positions are modified to phosphoserine: S7, S13, S16, and S61. A coiled-coil region spans residues A14–K63. T96 is modified (phosphothreonine). Residues G114–S134 show a composition bias toward basic and acidic residues. The residue at position 134 (S134) is a Phosphoserine; by NEK7. Low complexity predominate over residues Q137–Q155. S144 bears the Phosphoserine; by NEK6 mark. Phosphoserine; by NEK7 is present on S146. Residue S171 is modified to Phosphoserine. Residues S176 to N193 show a composition bias toward basic and acidic residues. S200 carries the phosphoserine modification. T201 carries the post-translational modification Phosphothreonine. At Y226 the chain carries Phosphotyrosine. T237 carries the phosphothreonine modification. WD repeat units follow at residues L259–Y297, T301–S348, I356–W396, A403–W438, and R445–K484. At T490 the chain carries Phosphothreonine; by NEK6. 8 WD repeats span residues Q500 to H538, E543 to T579, D582 to S621, R625 to A662, V668 to V704, Y711 to I750, R760 to Y818, and A825 to L864. Phosphothreonine; by NEK6 and NEK7 is present on T609. Polar residues predominate over residues L881–I893. Residues L881–S981 form a disordered region. A phosphoserine mark is found at S891 and S895. T897 and T899 each carry phosphothreonine. S903 is modified (phosphoserine). Residues I916–V931 are compositionally biased toward polar residues. The segment covering H937–S946 has biased composition (acidic residues). S978 is subject to Phosphoserine. The residue at position 981 (S981) is a Phosphoserine; by NEK6 and NEK7.

The protein belongs to the WD repeat EMAP family. As to quaternary structure, homotrimer; self-association is mediated by the N-terminal coiled coil. Interacts (via WD repeats) with NUDC. Interacts with alpha- and beta-tubulin during mitosis. Phosphorylated during mitosis. Phosphorylation at Ser-144 and Ser-146 promotes its dissociation from microtubules during mitosis which is required for efficient chromosome congression.

The protein localises to the cytoplasm. It localises to the cytoskeleton. The protein resides in the spindle. Its subcellular location is the microtubule organizing center. It is found in the midbody. Functionally, essential for the formation and stability of microtubules (MTs). Required for the organization of the mitotic spindle and for the proper attachment of kinetochores to MTs. Promotes the recruitment of NUDC to the mitotic spindle for mitotic progression. In Homo sapiens (Human), this protein is Echinoderm microtubule-associated protein-like 4 (EML4).